Consider the following 518-residue polypeptide: G1/S-specific cyclin-E (518 aa).

The interval 1-193 (MAGRKSSRTT…DEETEDEFDL (193 aa)) is disordered. Basic and acidic residues predominate over residues 13 to 46 (PVKKAERKSAILSPHDELRERLLETSLDVKENIP). The span at 47–62 (ERSSSTRNESVGSQRS) shows a compositional bias: polar residues. The segment covering 82-107 (PSTEKKGNGSRDDSFSSVFSEDRETE) has biased composition (basic and acidic residues). Residues 108 to 119 (SSVGSTSSRTRG) are compositionally biased toward low complexity. The span at 135 to 154 (SSDHNAESEESRETPQSDEH) shows a compositional bias: basic and acidic residues. Residues 155–192 (DGFEEDGDVEDDVSSDVNDEEDEYDEYEEDEETEDEFD) show a composition bias toward acidic residues.

It belongs to the cyclin family. Cyclin E subfamily. As to quaternary structure, interacts with a member of the CDK2/CDK protein kinases to form a serine/threonine kinase holoenzyme complex. The cyclin subunit imparts substrate specificity to the complex.

The protein localises to the nucleus. It is found in the cytoplasm. The protein resides in the cytoskeleton. Its subcellular location is the microtubule organizing center. It localises to the centrosome. The protein localises to the centriole. Its function is as follows. Essential for the control of the cell cycle at the G1/S (start) transition. In association with cdk-2, regulates proliferation, quiescent state and cell fate during the development of several cell lineages. In the embryo, initiates the establishment of cell polarity through the recruitment of the centrosomal proteins spd-2 and spd-5 during prophase. During the development of the vulva, controls the onset of vulval cell terminal differentiation by controlling the duration of G1 phase. During hypoderm development at early larval stages, controls syncytial fate of seam cell daughter cells. Involved in the progression of cell division in the intestinal lineage in larvae, and in particular in endoreplication, a specific growth pathway in the intestinal epithelium, required for feeding and gut development in growing larvae. By controlling the activity of translational repressor gld-1, regulates the pool of germline stem cells and the size of the mitotic zone by preventing entry into meiosis. In addition, repression of expression by gld-1 prevents mitosis re-entry in meiotic germline cells. This Caenorhabditis briggsae protein is G1/S-specific cyclin-E (cye-1).